Reading from the N-terminus, the 1026-residue chain is Contactin-4 (1026 aa).

Residues 1-18 form the signal peptide; it reads MRLPWELLVLQSFILCLA. 6 consecutive Ig-like C2-type domains span residues 32–117, 122–207, 225–311, 316–400, 406–493, and 497–586; these read PSPV…AKLQ, DNFK…KVLG, PKIE…GQLT, PNWI…AELS, PDFS…GNLV, and PTRV…DRLS. 6 cysteine pairs are disulfide-bonded: C50–C100, C144–C194, C247–C295, C337–C384, C429–C477, and C519–C576. 3 N-linked (GlcNAc...) asparagine glycosylation sites follow: N65, N90, and N191. N-linked (GlcNAc...) asparagine glycosylation is found at N370, N375, and N466. Fibronectin type-III domains follow at residues 599-697, 702-799, 804-899, and 900-995; these read PPEA…TEEA, TPAN…SAEE, PPAS…TRKP, and PPSQ…ISNA. The tract at residues 685 to 710 is disordered; the sequence is PSRPSEKRRTEEALPEVTPANVSGGG. Residues 687 to 696 show a composition bias toward basic and acidic residues; that stretch reads RPSEKRRTEE. N705, N764, N858, N893, N911, N929, and N954 each carry an N-linked (GlcNAc...) asparagine glycan. A compositionally biased stretch (polar residues) spans 886-896; that stretch reads GPSSATVNVTT. Residues 886–907 form a disordered region; it reads GPSSATVNVTTRKPPPSQPPGN. S1000 carries GPI-anchor amidated serine lipidation. The propeptide at 1001 to 1026 is removed in mature form; the sequence is GASTSNACTLSAISTIMISLTARSSL.

This sequence belongs to the immunoglobulin superfamily. Contactin family. Interacts with PTPRG. Mainly expressed in brain. Highly expressed in cerebellum and weakly expressed in corpus callosum, caudate nucleus, amygdala and spinal cord. Also expressed in testis, pancreas, thyroid, uterus, small intestine and kidney. Not expressed in skeletal muscle. Isoform 2 is weakly expressed in cerebral cortex.

It is found in the cell membrane. The protein localises to the secreted. Functionally, contactins mediate cell surface interactions during nervous system development. Has some neurite outgrowth-promoting activity. May be involved in synaptogenesis. This is Contactin-4 (CNTN4) from Homo sapiens (Human).